The primary structure comprises 196 residues: Acyl-homoserine-lactone synthase (196 aa).

The protein belongs to the autoinducer synthase family.

The enzyme catalyses a fatty acyl-[ACP] + S-adenosyl-L-methionine = an N-acyl-L-homoserine lactone + S-methyl-5'-thioadenosine + holo-[ACP] + H(+). Its function is as follows. Required for the synthesis of a yet unknown N-aceyl-homoserine lactone (N-aceyl-HSL), an autoinducer molecule which binds to PhzR and thus regulates phenazine production. The sequence is that of Acyl-homoserine-lactone synthase (phzI) from Pseudomonas fluorescens.